The primary structure comprises 472 residues: Phosphoenolpyruvate carboxykinase (ATP), glycosomal (472 aa).

Residue 221–228 (GLSGTGKT) participates in ATP binding.

This sequence belongs to the phosphoenolpyruvate carboxykinase (ATP) family. In terms of assembly, homodimer.

It localises to the glycosome. It carries out the reaction oxaloacetate + ATP = phosphoenolpyruvate + ADP + CO2. It functions in the pathway carbohydrate biosynthesis; gluconeogenesis. P60 has the capability to bind to microtubules and membrane vesicles in vitro. The polypeptide is Phosphoenolpyruvate carboxykinase (ATP), glycosomal (Trypanosoma brucei brucei).